A 1200-amino-acid chain; its full sequence is Zinc finger protein 804A (1200 aa).

The C2H2-type zinc-finger motif lies at 57 to 81 (FYCELCDKQYYKHQEFDNHINSYDH). 6 disordered regions span residues 252-280 (STSH…PEAM), 343-367 (DGPV…RTSA), 582-687 (HWFH…NCGG), 727-777 (EDDG…SDES), 799-828 (QPKK…NYPM), and 874-949 (PYNP…TNPE). The span at 585–603 (HKSRRKKKRRKLCRYHPGK) shows a compositional bias: basic residues. Positions 604-666 (SSKEPEGSGK…ASTHLGEKET (63 aa)) are enriched in basic and acidic residues. 2 stretches are compositionally biased toward polar residues: residues 667 to 687 (MNTT…NCGG) and 732 to 756 (LASQ…SLTN). A compositionally biased stretch (basic residues) spans 800–811 (PKKKRRRKRSRL). Polar residues predominate over residues 891-944 (TETTPCDSSQTSNDLATPVNVTRDPSNSTTDNTLLEHNQRSQTTNSNEKQTPFK).

The chain is Zinc finger protein 804A (Znf804a) from Mus musculus (Mouse).